The chain runs to 441 residues: Growth/differentiation factor 9 (441 aa).

The N-terminal stretch at 1 to 29 (MALPSNFLLGVCCFAWLCFLSSLSSQAST) is a signal peptide. A propeptide spanning residues 30-306 (EESQSGASEN…EVERSPRRRR (277 aa)) is cleaved from the precursor. 4 N-linked (GlcNAc...) asparagine glycosylation sites follow: asparagine 163, asparagine 229, asparagine 258, and asparagine 325. Cystine bridges form between cysteine 340–cysteine 406, cysteine 369–cysteine 438, and cysteine 373–cysteine 440.

This sequence belongs to the TGF-beta family. In terms of assembly, homodimer or heterodimer (Potential). But, in contrast to other members of this family, cannot be disulfide-linked. Post-translationally, phosphorylated; phosphorylation is critical for GDF9 function. As to expression, ovary. Strongly expressed in germinal vesicle (GV) stage oocytes, MII-stage oocytes and in zygotes.

It is found in the secreted. Its function is as follows. Required for ovarian folliculogenesis. The polypeptide is Growth/differentiation factor 9 (Gdf9) (Mus musculus (Mouse)).